The primary structure comprises 310 residues: ADP-L-glycero-D-manno-heptose-6-epimerase (310 aa).

Residues 10–11 (FI), 31–32 (DN), Lys38, Lys53, 75–79 (EGACS), and Asn92 contribute to the NADP(+) site. Tyr140 acts as the Proton acceptor in catalysis. Lys144 provides a ligand contact to NADP(+). Asn169 is a substrate binding site. 2 residues coordinate NADP(+): Val170 and Lys178. The active-site Proton acceptor is Lys178. Substrate contacts are provided by residues Ser180, His187, 201–204 (FEGS), Arg209, and Tyr272.

The protein belongs to the NAD(P)-dependent epimerase/dehydratase family. HldD subfamily. As to quaternary structure, homopentamer. The cofactor is NADP(+).

The catalysed reaction is ADP-D-glycero-beta-D-manno-heptose = ADP-L-glycero-beta-D-manno-heptose. The protein operates within nucleotide-sugar biosynthesis; ADP-L-glycero-beta-D-manno-heptose biosynthesis; ADP-L-glycero-beta-D-manno-heptose from D-glycero-beta-D-manno-heptose 7-phosphate: step 4/4. Catalyzes the interconversion between ADP-D-glycero-beta-D-manno-heptose and ADP-L-glycero-beta-D-manno-heptose via an epimerization at carbon 6 of the heptose. This Salmonella heidelberg (strain SL476) protein is ADP-L-glycero-D-manno-heptose-6-epimerase.